Here is a 341-residue protein sequence, read N- to C-terminus: Large ribosomal subunit protein uL29m (341 aa).

The disordered stretch occupies residues 44–74 (LARTRYTKPKPKPPRRSKVRAPTQTTHHDTD). Basic residues predominate over residues 48 to 62 (RYTKPKPKPPRRSKV).

This sequence belongs to the universal ribosomal protein uL29 family. In terms of assembly, component of the mitochondrial large ribosomal subunit. Mature mitochondrial ribosomes consist of a small (37S) and a large (54S) subunit. The 37S subunit contains at least 33 different proteins and 1 molecule of RNA (15S). The 54S subunit contains at least 45 different proteins and 1 molecule of RNA (21S).

It is found in the mitochondrion. The sequence is that of Large ribosomal subunit protein uL29m (MRPL4) from Eremothecium gossypii (strain ATCC 10895 / CBS 109.51 / FGSC 9923 / NRRL Y-1056) (Yeast).